The sequence spans 465 residues: Serine carboxypeptidase 24 (465 aa).

A signal peptide spans 1 to 24 (MARTHFIFLLLVALLSTTFPSSSS). 3 N-linked (GlcNAc...) asparagine glycosylation sites follow: Asn-54, Asn-105, and Asn-139. 3 disulfides stabilise this stretch: Cys-88/Cys-349, Cys-249/Cys-260, and Cys-285/Cys-317. Ser-181 is an active-site residue. Residues Asn-250, Asn-293, and Asn-338 are each glycosylated (N-linked (GlcNAc...) asparagine). A propeptide spans 287–316 (AAQQKKNTTGFFVRMKNTLLRRRLVSGYDP) (linker peptide). Residues Asp-386 and His-438 contribute to the active site.

It belongs to the peptidase S10 family. Heterodimer. In terms of processing, N-glycosylated. Expressed in shoots, leaves, cauline leaves, siliques and flowers. Expressed a low levels in roots and stems.

It localises to the secreted. Its subcellular location is the extracellular space. It catalyses the reaction Preferential release of a C-terminal arginine or lysine residue.. Completely inhibited by phenylmethylsulfonyl fluoride (PMSF) and partially by leupeptin. Functionally, active serine carboxypeptidase with broad substrate preference, including basic and hydrophilic groups. Processes a protein involved in an early event in the brassinosteroid signaling pathway. This is Serine carboxypeptidase 24 (SCPL24) from Arabidopsis thaliana (Mouse-ear cress).